The following is a 941-amino-acid chain: MTVDYKNTLNLPETSFPMRGDLAKREPDMLKNWYEKNLYQKIRKASKGKKSFILHDGPPYANGNIHIGHAVNKILKDIIIKSKTALGFDSPYIPGWDCHGLPIELKVEGLVGKPNEKISAAEFRQKCREYASEQVEGQKKDFIRLGVLGDWDNPYLTMNFDTEANIIRTLGKVIENGHLYKGSKPVHWCLDCGSSLAEAEVEYEDKVSPSIYVRFPAESAVEIEAKFSAQGRGQGKLSAIIWTTTPWTMPSNRAIAVNADLEYNLVQLGDERVILAAELVESVAKAVGVEQVEILGSVKGADLELSRFHHPFYDFTVPVILGDHVTTDGGTGLVHTAPDHGLDDFIVGKQYDLPMAGLVSNDGKFISTTEFFAGKGVFEANPLVIEKLQEVGNLLKVEKIKHSYPHCWRHKTPIIFRATPQWFIGMETQGLRQQALGEIKQVRWIPDWGQARIEKMVENRPDWCISRQRTWGVPMTLFVHKETEELHPRTLELLEEVAKRVERAGIQAWWDLDEKELLGADAETYRKVPDTLDVWFDSGSTYSSVVANRLEFNGQDIDMYLEGSDQHRGWFMSSLMLSTATNSKAPYKQVLTHGFTVDGQGRKMSKSIGNIVTPQEVMDKFGGDILRLWVASTDYTGEMTVSDEILKRAADSYRRIRNTARFLLANLNGFDPKRDLVKPEEMISLDRWAVACALDAQNEIKDAYDNYQFHTVVQRLMRFCSVEMGSFYLDIIKDRQYTTKADSLARRSCQTALWHIAEALVRWMAPILSFTADEIWQHLPQTESARAEFVFTEEFYQGLFGLGEDEKLDDAYWQQLIKVRSEVNRVLEISRNNKEIGGGLEAEVTVYANDEYRALLAQLGNELRFVLITSKVDVKSLSEKPADLADSELEGIAVSVTRSNAEKCPRCWHYSDEIGVSPGHPTLCARCVENVVGNGEVRYFA.

The short motif at Pro59–His69 is the 'HIGH' region element. Glu562 lines the L-isoleucyl-5'-AMP pocket. The 'KMSKS' region motif lies at Lys603–Ser607. An ATP-binding site is contributed by Lys606. Cys904, Cys907, Cys924, and Cys927 together coordinate Zn(2+).

This sequence belongs to the class-I aminoacyl-tRNA synthetase family. IleS type 1 subfamily. In terms of assembly, monomer. It depends on Zn(2+) as a cofactor.

Its subcellular location is the cytoplasm. The enzyme catalyses tRNA(Ile) + L-isoleucine + ATP = L-isoleucyl-tRNA(Ile) + AMP + diphosphate. Functionally, catalyzes the attachment of isoleucine to tRNA(Ile). As IleRS can inadvertently accommodate and process structurally similar amino acids such as valine, to avoid such errors it has two additional distinct tRNA(Ile)-dependent editing activities. One activity is designated as 'pretransfer' editing and involves the hydrolysis of activated Val-AMP. The other activity is designated 'posttransfer' editing and involves deacylation of mischarged Val-tRNA(Ile). This Haemophilus influenzae (strain 86-028NP) protein is Isoleucine--tRNA ligase.